A 364-amino-acid polypeptide reads, in one-letter code: Probable dual-specificity RNA methyltransferase RlmN (364 aa).

The active-site Proton acceptor is E107. Residues 113–346 (HDYGNSVCVT…ATIRREQGSD (234 aa)) form the Radical SAM core domain. The cysteines at positions 120 and 351 are disulfide-linked. [4Fe-4S] cluster is bound by residues C127, C131, and C134. S-adenosyl-L-methionine contacts are provided by residues 177-178 (GE), S209, 232-234 (SLH), and N308. C351 (S-methylcysteine intermediate) is an active-site residue.

It belongs to the radical SAM superfamily. RlmN family. [4Fe-4S] cluster is required as a cofactor.

It localises to the cytoplasm. The enzyme catalyses adenosine(2503) in 23S rRNA + 2 reduced [2Fe-2S]-[ferredoxin] + 2 S-adenosyl-L-methionine = 2-methyladenosine(2503) in 23S rRNA + 5'-deoxyadenosine + L-methionine + 2 oxidized [2Fe-2S]-[ferredoxin] + S-adenosyl-L-homocysteine. It catalyses the reaction adenosine(37) in tRNA + 2 reduced [2Fe-2S]-[ferredoxin] + 2 S-adenosyl-L-methionine = 2-methyladenosine(37) in tRNA + 5'-deoxyadenosine + L-methionine + 2 oxidized [2Fe-2S]-[ferredoxin] + S-adenosyl-L-homocysteine. Its function is as follows. Specifically methylates position 2 of adenine 2503 in 23S rRNA and position 2 of adenine 37 in tRNAs. Confers resistance to some classes of antibiotics. This is Probable dual-specificity RNA methyltransferase RlmN from Staphylococcus aureus (strain Mu3 / ATCC 700698).